The sequence spans 106 residues: L-rhamnose mutarotase (106 aa).

Position 20 (Y20) interacts with substrate. The active-site Proton donor is H24. Substrate is bound by residues Y43 and 78 to 79 (WW).

It belongs to the rhamnose mutarotase family. Homodimer.

It localises to the cytoplasm. The enzyme catalyses alpha-L-rhamnose = beta-L-rhamnose. Its pathway is carbohydrate metabolism; L-rhamnose metabolism. Involved in the anomeric conversion of L-rhamnose. The protein is L-rhamnose mutarotase of Rhizobium johnstonii (strain DSM 114642 / LMG 32736 / 3841) (Rhizobium leguminosarum bv. viciae).